The chain runs to 260 residues: Sperm microtubule inner protein 6 (260 aa).

This sequence belongs to the SPMIP6 family. As to quaternary structure, microtubule inner protein component of sperm flagellar doublet microtubules. Interacts with alpha-tubulin. As to expression, testis-specific, expressed exclusively in germ cells (at protein level). Testis-specific. In terms of tissue distribution, expressed in both lung and testis.

The protein resides in the cytoplasm. The protein localises to the cytoskeleton. Its subcellular location is the nucleus. It localises to the mitochondrion. It is found in the flagellum axoneme. In terms of biological role, may participate in intramanchette transport and midpiece formation of the sperm tail. May play a potential role in somatic cell proliferation. In Mus musculus (Mouse), this protein is Sperm microtubule inner protein 6 (SPMIP6).